The following is a 128-amino-acid chain: Fluoride-specific ion channel FluC (128 aa).

4 consecutive transmembrane segments (helical) span residues 6 to 26, 36 to 56, 68 to 88, and 99 to 119; these read LVAL…GLVL, LPTF…AGLA, VLLF…GLET, and IAAA…WLGF. The Na(+) site is built by G76 and T79.

It belongs to the fluoride channel Fluc/FEX (TC 1.A.43) family.

It is found in the cell inner membrane. It catalyses the reaction fluoride(in) = fluoride(out). With respect to regulation, na(+) is not transported, but it plays an essential structural role and its presence is essential for fluoride channel function. Its function is as follows. Fluoride-specific ion channel. Important for reducing fluoride concentration in the cell, thus reducing its toxicity. This chain is Fluoride-specific ion channel FluC, found in Methylobacillus flagellatus (strain ATCC 51484 / DSM 6875 / VKM B-1610 / KT).